We begin with the raw amino-acid sequence, 221 residues long: Toll/interleukin-1 receptor domain-containing adapter protein (221 aa).

The tract at residues 1-82 (MASSTSLPAP…HASDSGSSRW (82 aa)) is disordered. Positions 48-67 (SQPTSQDSPLPPSLSSVTSP) are enriched in low complexity. The TIR domain maps to 84 to 213 (KDYDVCVCHS…GGFRQVKEAV (130 aa)). Cystine bridges form between cysteine 89–cysteine 134 and cysteine 142–cysteine 174.

In terms of assembly, homodimer. Also forms heterodimers with MYD88. May interact with PIK3AP1. Interacts with TLR4 and IRAK2 via their respective TIR domains. Interacts with BMX and TBK1. Interacts with EIF2AK2. Does not interact with IRAK1, nor TLR9. Interacts with TLR2. Interacts with RAGE/AGER. As to quaternary structure, (Microbial infection) In case of infection, interacts with B.melitensis protein TcpB (AC Q8YF53); TcpB abolishes the TLR4-TIRAP interaction and downstream signaling. In terms of processing, phosphorylated by IRAK1 and IRAK4. Also phosphorylated by BTK. Polyubiquitinated. Polyubiquitination follows phosphorylation by BTK and leads to TIRAP degradation. As to expression, highly expressed in liver, kidney, spleen, skeletal muscle and heart. Also detected in peripheral blood leukocytes, lung, placenta, small intestine, thymus, colon and brain.

The protein resides in the cytoplasm. The protein localises to the cell membrane. It localises to the membrane. Functionally, adapter involved in TLR2, TLR4 and RAGE signaling pathways in the innate immune response. Acts via IRAK2 and TRAF-6, leading to the activation of NF-kappa-B, MAPK1, MAPK3 and JNK, and resulting in cytokine secretion and the inflammatory response. Positively regulates the production of TNF-alpha (TNF) and interleukin-6 (IL6). The polypeptide is Toll/interleukin-1 receptor domain-containing adapter protein (TIRAP) (Homo sapiens (Human)).